Here is a 76-residue protein sequence, read N- to C-terminus: Defensin-like protein 155 (76 aa).

The N-terminal stretch at 1–27 is a signal peptide; the sequence is MAKISCSYLLILMLALSVFSVVEKAKG. 4 disulfide bridges follow: Cys31–Cys76, Cys40–Cys59, Cys45–Cys70, and Cys49–Cys72.

Belongs to the DEFL family.

Its subcellular location is the secreted. This chain is Defensin-like protein 155 (LCR36), found in Arabidopsis thaliana (Mouse-ear cress).